A 276-amino-acid polypeptide reads, in one-letter code: Rhomboid protease GlpG (276 aa).

Helical transmembrane passes span 94–114 (GPVT…MQIL), 142–162 (ALMH…WYLG), 169–189 (LGSG…GYVQ), 192–212 (FSGP…GYVW), 229–249 (LIIF…GMSM), and 250–270 (ANGA…VDSL). The Nucleophile role is filled by Ser201. His254 is an active-site residue.

This sequence belongs to the peptidase S54 family.

The protein localises to the cell inner membrane. It carries out the reaction Cleaves type-1 transmembrane domains using a catalytic dyad composed of serine and histidine that are contributed by different transmembrane domains.. Rhomboid-type serine protease that catalyzes intramembrane proteolysis. In Escherichia coli (strain 55989 / EAEC), this protein is Rhomboid protease GlpG.